Here is a 301-residue protein sequence, read N- to C-terminus: G-protein coupled receptor homolog U51 (301 aa).

Over 1–15 (MEKETKSLAWPATAE) the chain is Extracellular. Residues 16-36 (FYGWVFIFSSIQLCTMVLLTV) form a helical membrane-spanning segment. The Cytoplasmic segment spans residues 37–48 (RFNSFKVGREYA). Residues 49 to 69 (VFTFAGMSFNCFLLPIKMGLL) traverse the membrane as a helical segment. Over 70–82 (SGHWSLPRDFCAI) the chain is Extracellular. Residues 83 to 103 (LLYIDDFSIYFSSWSLVFMAI) traverse the membrane as a helical segment. The Cytoplasmic portion of the chain corresponds to 104–122 (ERINHFCYSTPLLNENSKA). The helical transmembrane segment at 123–143 (LAKVCFPIVWIISGVQALQML) threads the bilayer. Topologically, residues 144-168 (NNYKATALQNETPQCFLAFLRSGYD) are extracellular. The chain crosses the membrane as a helical span at residues 169 to 189 (MWLMLVYSVMIPVMLVFIYIY). Residues 190–199 (SKNFMLLKDE) are Cytoplasmic-facing. A helical membrane pass occupies residues 200 to 220 (LSTVTTYLCIYLLLGTIAHLP). At 221 to 238 (KAGLSEIESDKIFYGLRD) the chain is on the extracellular side. Residues 239-259 (IFMALPVLKVYYIPVMAYCMA) form a helical membrane-spanning segment. Over 260 to 301 (CDDHTVPVRLCSIWLVNLCKKCFSCTRREKESDLEVGIKMLK) the chain is Cytoplasmic.

It belongs to the G-protein coupled receptor 1 family.

The protein localises to the host cell membrane. The chain is G-protein coupled receptor homolog U51 (U51) from Homo sapiens (Human).